Here is a 309-residue protein sequence, read N- to C-terminus: Malate dehydrogenase (309 aa).

NAD(+) contacts are provided by residues 6 to 11 (GSGRVG) and aspartate 31. Residues arginine 80 and arginine 86 each contribute to the substrate site. Residues asparagine 93 and 116-118 (TTN) contribute to the NAD(+) site. Residues asparagine 118 and arginine 149 each contribute to the substrate site. The Proton acceptor role is filled by histidine 173.

The protein belongs to the LDH/MDH superfamily. Homotetramer.

The enzyme catalyses (S)-malate + NAD(+) = oxaloacetate + NADH + H(+). Its function is as follows. Catalyzes the reversible oxidation of malate to oxaloacetate. Exhibits higher specific activity for oxaloacetate reduction than for malate oxidation in vitro. Has a strong preference for NAD. Can use NADPH for oxaloacetate reduction, but activity decreases more than 90%. No activity detected with NADP(+) and malate. The chain is Malate dehydrogenase from Pyrobaculum islandicum (strain DSM 4184 / JCM 9189 / GEO3).